A 394-amino-acid polypeptide reads, in one-letter code: Elongation factor Tu (394 aa).

Residues 10-204 (KPHVNVGTIG…ALDSYIPEPE (195 aa)) form the tr-type G domain. Positions 19 to 26 (GHVDHGKT) are G1. Residue 19–26 (GHVDHGKT) participates in GTP binding. T26 contacts Mg(2+). Positions 60 to 64 (GITIN) are G2. Residues 81-84 (DCPG) form a G3 region. GTP-binding positions include 81–85 (DCPGH) and 136–139 (NKCD). The G4 stretch occupies residues 136–139 (NKCD). The interval 174–176 (SAL) is G5.

Belongs to the TRAFAC class translation factor GTPase superfamily. Classic translation factor GTPase family. EF-Tu/EF-1A subfamily. Monomer.

It localises to the cytoplasm. The enzyme catalyses GTP + H2O = GDP + phosphate + H(+). Its function is as follows. GTP hydrolase that promotes the GTP-dependent binding of aminoacyl-tRNA to the A-site of ribosomes during protein biosynthesis. The chain is Elongation factor Tu from Sodalis glossinidius (strain morsitans).